The chain runs to 1098 residues: Early transcription factor large subunit homolog (1098 aa).

Residues 17–317 (KGGRAFFPCD…PNGQPLQRQQ (301 aa)) form the Helicase ATP-binding domain. 64 to 71 (WQTGTGKS) contributes to the ATP binding site. Residues 246 to 249 (DEIH) carry the DEAH box motif. Residues 489 to 689 (MMKDILSIIR…EGDKALRKHA (201 aa)) enclose the Helicase C-terminal domain.

The protein belongs to the DEAD box helicase family. DEAH subfamily.

It localises to the virion. The enzyme catalyses ATP + H2O = ADP + phosphate + H(+). Putative initation factor. In African swine fever virus (isolate Tick/Malawi/Lil 20-1/1983) (ASFV), this protein is Early transcription factor large subunit homolog.